The following is a 1401-amino-acid chain: Lysine-specific demethylase 6A (1401 aa).

The interaction with SUPT6H stretch occupies residues 1–1095 (MKSCGVSLAT…TNIDLSDDKK (1095 aa)). TPR repeat units follow at residues 95-128 (SDFFCQLGHFNLLLEDYPKALSAYQRYYSLQSDY), 132-165 (AAFLYGLGLVYFHYNAFQWAIKAFQEVLYVDPSF), 169-203 (KEIHLRLGLMFKVNTDYESSLKHFQLALVDCNPCT), 207-240 (AEIQFHIAHLYETQRKYHSAKEAYEQLLQTENLS), 245-285 (ATIL…DPNS), 286-319 (GQSWYFLGRCYSSIGKVQDAFISYRQSIDKSEAS), 321-353 (DTWCSIGVLYQQQNQPMDALQAYICAVQLDHGH), and 355-387 (AAWMDLGTLYESCNQPQDAIKCYLNATRSKNCS). A compositionally biased stretch (polar residues) spans 439–453 (AMNTAQQNTSDNWSG). A disordered region spans residues 439–463 (AMNTAQQNTSDNWSGGNAPPPVEQQ). An omega-N-methylarginine mark is found at arginine 519 and arginine 549. Composition is skewed to polar residues over residues 596–606 (NHVTGSGSNGN), 619–642 (HNRTNLTSSTEEPWKNQLSNSTQG), and 660–743 (LSST…STAS). A disordered region spans residues 596 to 745 (NHVTGSGSNG…ETPNSTASVE (150 aa)). Residue serine 769 is modified to Phosphoserine. 3 disordered regions span residues 795–863 (GTCD…EESQ), 914–941 (LLDKCPPPRPPSSPYPPLPKDKLNPPTP), and 1043–1080 (FQESLREENEKRSHHKDHSDSESTSSDNSGKRRKGPFK). The segment covering 814–833 (SVASSPSSAISTATPSPKST) has biased composition (low complexity). Position 827 is a phosphothreonine (threonine 827). Residue serine 829 is modified to Phosphoserine. A compositionally biased stretch (polar residues) spans 834 to 848 (EQTTTNSVTSLNSPH). Over residues 918 to 931 (CPPPRPPSSPYPPL) the composition is skewed to pro residues. Residues 1046 to 1063 (SLREENEKRSHHKDHSDS) are compositionally biased toward basic and acidic residues. Residues 1095 to 1258 (KWKLQLHELT…YKLAVERYEW (164 aa)) form the JmjC domain. Histidine 1146, glutamate 1148, and histidine 1226 together coordinate Fe cation. Zn(2+) contacts are provided by cysteine 1331, cysteine 1334, cysteine 1358, and cysteine 1361.

Belongs to the UTX family. In terms of assembly, component of the MLL2/3 complex (also named ASCOM complex), at least composed of KMT2D/MLL2 or KMT2C/MLL3, ASH2L, RBBP5, WDR5, NCOA6, DPY30, KDM6A (or KDM6B), PAXIP1/PTIP, PAGR1 and alpha- and beta-tubulin. Interacts with TLE1. Interacts with SUPT6H. Interacts with SMARCA4. Interacts with PROSER1. Requires L-ascorbate as cofactor. Fe(2+) is required as a cofactor. In terms of tissue distribution, expressed in brain, heart and spleen.

It is found in the nucleus. The enzyme catalyses N(6),N(6),N(6)-trimethyl-L-lysyl(27)-[histone H3] + 2 2-oxoglutarate + 2 O2 = N(6)-methyl-L-lysyl(27)-[histone H3] + 2 formaldehyde + 2 succinate + 2 CO2. Histone demethylase that specifically demethylates 'Lys-27' of histone H3, thereby playing a central role in histone code. Demethylates trimethylated and dimethylated but not monomethylated H3 'Lys-27'. Plays a central role in regulation of posterior development, by regulating HOX gene expression. Demethylation of 'Lys-27' of histone H3 is concomitant with methylation of 'Lys-4' of histone H3, and regulates the recruitment of the PRC1 complex and monoubiquitination of histone H2A. Plays a demethylase-independent role in chromatin remodeling to regulate T-box family member-dependent gene expression. The chain is Lysine-specific demethylase 6A (Kdm6a) from Mus musculus (Mouse).